The following is an 82-amino-acid chain: 4-(gamma-L-glutamylamino)butanoyl-[BtrI acyl-carrier protein] monooxygenase BtrO (82 aa).

As to quaternary structure, homotetramer.

The enzyme catalyses 4-(gamma-L-glutamylamino)butanoyl-[BtrI ACP] + FMNH2 + O2 = 4-(gamma-L-glutamylamino)-(2S)-2-hydroxybutanoyl-[BtrI ACP] + FMN + H2O + H(+). Its pathway is antibiotic biosynthesis; butirosin biosynthesis. Functionally, NAD(P)H:FMN oxidoreductase component of a two-component system involved in the biosynthesis of the side chain of the aminoglycoside antibiotics in the biosynthetic pathway of butirosin. Together with BtrO, mediates hydroxylation of gamma-L-Glu-GABA-S-BtrI. The protein is 4-(gamma-L-glutamylamino)butanoyl-[BtrI acyl-carrier protein] monooxygenase BtrO (btrV) of Niallia circulans (Bacillus circulans).